A 197-amino-acid chain; its full sequence is Dephospho-CoA kinase (197 aa).

In terms of domain architecture, DPCK spans 3-197 (ILGLTGSIAM…TGCLVGQGSR (195 aa)). 11–16 (AMGKST) contributes to the ATP binding site.

It belongs to the CoaE family.

It is found in the cytoplasm. The enzyme catalyses 3'-dephospho-CoA + ATP = ADP + CoA + H(+). Its pathway is cofactor biosynthesis; coenzyme A biosynthesis; CoA from (R)-pantothenate: step 5/5. Its function is as follows. Catalyzes the phosphorylation of the 3'-hydroxyl group of dephosphocoenzyme A to form coenzyme A. The sequence is that of Dephospho-CoA kinase from Zymomonas mobilis subsp. mobilis (strain ATCC 31821 / ZM4 / CP4).